The following is a 390-amino-acid chain: Succinate--CoA ligase [ADP-forming] subunit beta (390 aa).

The ATP-grasp domain maps to 9 to 244; the sequence is KEIFRKYGVP…LDEEEPTEVE (236 aa). ATP is bound by residues K46, 53 to 55, E99, A102, and E107; that span reads GRG. N199 and D213 together coordinate Mg(2+). Residues N264 and 321 to 323 contribute to the substrate site; that span reads GIV.

Belongs to the succinate/malate CoA ligase beta subunit family. Heterotetramer of two alpha and two beta subunits. Requires Mg(2+) as cofactor.

It catalyses the reaction succinate + ATP + CoA = succinyl-CoA + ADP + phosphate. The catalysed reaction is GTP + succinate + CoA = succinyl-CoA + GDP + phosphate. It participates in carbohydrate metabolism; tricarboxylic acid cycle; succinate from succinyl-CoA (ligase route): step 1/1. Succinyl-CoA synthetase functions in the citric acid cycle (TCA), coupling the hydrolysis of succinyl-CoA to the synthesis of either ATP or GTP and thus represents the only step of substrate-level phosphorylation in the TCA. The beta subunit provides nucleotide specificity of the enzyme and binds the substrate succinate, while the binding sites for coenzyme A and phosphate are found in the alpha subunit. In Nautilia profundicola (strain ATCC BAA-1463 / DSM 18972 / AmH), this protein is Succinate--CoA ligase [ADP-forming] subunit beta.